The following is a 181-amino-acid chain: Inner membrane-spanning protein YciB (181 aa).

The next 5 membrane-spanning stretches (helical) occupy residues leucine 10–isoleucine 30, methionine 50–aspartate 70, serine 72–serine 92, valine 118–phenylalanine 138, and phenylalanine 148–leucine 168.

This sequence belongs to the YciB family.

It is found in the cell inner membrane. In terms of biological role, plays a role in cell envelope biogenesis, maintenance of cell envelope integrity and membrane homeostasis. The protein is Inner membrane-spanning protein YciB of Shewanella pealeana (strain ATCC 700345 / ANG-SQ1).